Here is a 446-residue protein sequence, read N- to C-terminus: ATP-dependent protease ATPase subunit HslU (446 aa).

ATP-binding positions include I18, 60–65, D259, E324, and R396; that span reads GVGKTE.

It belongs to the ClpX chaperone family. HslU subfamily. As to quaternary structure, a double ring-shaped homohexamer of HslV is capped on each side by a ring-shaped HslU homohexamer. The assembly of the HslU/HslV complex is dependent on binding of ATP.

It localises to the cytoplasm. Its function is as follows. ATPase subunit of a proteasome-like degradation complex; this subunit has chaperone activity. The binding of ATP and its subsequent hydrolysis by HslU are essential for unfolding of protein substrates subsequently hydrolyzed by HslV. HslU recognizes the N-terminal part of its protein substrates and unfolds these before they are guided to HslV for hydrolysis. The polypeptide is ATP-dependent protease ATPase subunit HslU (Vibrio atlanticus (strain LGP32) (Vibrio splendidus (strain Mel32))).